The following is a 337-amino-acid chain: tRNA N6-adenosine threonylcarbamoyltransferase (337 aa).

His111 and His115 together coordinate Fe cation. Substrate-binding positions include 134-138 (LVSGG), Asp167, Gly180, and Asn272. Asp300 lines the Fe cation pocket.

It belongs to the KAE1 / TsaD family. Fe(2+) is required as a cofactor.

The protein resides in the cytoplasm. The catalysed reaction is L-threonylcarbamoyladenylate + adenosine(37) in tRNA = N(6)-L-threonylcarbamoyladenosine(37) in tRNA + AMP + H(+). Required for the formation of a threonylcarbamoyl group on adenosine at position 37 (t(6)A37) in tRNAs that read codons beginning with adenine. Is involved in the transfer of the threonylcarbamoyl moiety of threonylcarbamoyl-AMP (TC-AMP) to the N6 group of A37, together with TsaE and TsaB. TsaD likely plays a direct catalytic role in this reaction. This Citrobacter koseri (strain ATCC BAA-895 / CDC 4225-83 / SGSC4696) protein is tRNA N6-adenosine threonylcarbamoyltransferase.